The sequence spans 356 residues: Cytochrome b translation regulator cbp7 (356 aa).

As to quaternary structure, component of a complex, at least composed of cbp7 and cbp8.

Its subcellular location is the mitochondrion. Its function is as follows. Translation factor for cob1/cytochrome b; plays a role in cob1 mRNA stabilization and required for correct folding of the protein. This Schizosaccharomyces pombe (strain 972 / ATCC 24843) (Fission yeast) protein is Cytochrome b translation regulator cbp7.